The following is a 141-amino-acid chain: Nucleoside diphosphate kinase (141 aa).

The ATP site is built by lysine 11, phenylalanine 59, arginine 87, threonine 93, arginine 104, and asparagine 114. The active-site Pros-phosphohistidine intermediate is histidine 117.

Belongs to the NDK family. As to quaternary structure, homotetramer. Mg(2+) serves as cofactor.

The protein resides in the cytoplasm. It carries out the reaction a 2'-deoxyribonucleoside 5'-diphosphate + ATP = a 2'-deoxyribonucleoside 5'-triphosphate + ADP. The enzyme catalyses a ribonucleoside 5'-diphosphate + ATP = a ribonucleoside 5'-triphosphate + ADP. In terms of biological role, major role in the synthesis of nucleoside triphosphates other than ATP. The ATP gamma phosphate is transferred to the NDP beta phosphate via a ping-pong mechanism, using a phosphorylated active-site intermediate. The protein is Nucleoside diphosphate kinase of Teredinibacter turnerae (strain ATCC 39867 / T7901).